Consider the following 122-residue polypeptide: Photosystem II extrinsic protein U (122 aa).

A signal peptide spans 1–30 (MRWLLSILVRVVLVLCLCFAPLGIPVVARA).

Belongs to the PsbU family. As to quaternary structure, PSII is composed of 1 copy each of membrane proteins PsbA, PsbB, PsbC, PsbD, PsbE, PsbF, PsbH, PsbI, PsbJ, PsbK, PsbL, PsbM, PsbT, PsbX, PsbY, PsbZ, Psb30/Ycf12, peripheral proteins PsbO, CyanoQ (PsbQ), PsbU, PsbV and a large number of cofactors. It forms dimeric complexes.

The protein resides in the cellular thylakoid membrane. One of the extrinsic, lumenal subunits of photosystem II (PSII). PSII is a light-driven water plastoquinone oxidoreductase, using light energy to abstract electrons from H(2)O, generating a proton gradient subsequently used for ATP formation. The extrinsic proteins stabilize the structure of photosystem II oxygen-evolving complex (OEC), the ion environment of oxygen evolution and protect the OEC against heat-induced inactivation. This chain is Photosystem II extrinsic protein U, found in Synechococcus sp. (strain JA-2-3B'a(2-13)) (Cyanobacteria bacterium Yellowstone B-Prime).